The sequence spans 88 residues: Small ribosomal subunit protein bS20 (88 aa).

Residues 1-25 are disordered; sequence MANSAQARKRVRQNNTRRQHAASQR. The span at 7–20 shows a compositional bias: basic residues; the sequence is ARKRVRQNNTRRQH.

Belongs to the bacterial ribosomal protein bS20 family.

Functionally, binds directly to 16S ribosomal RNA. The sequence is that of Small ribosomal subunit protein bS20 from Psychrobacter sp. (strain PRwf-1).